A 563-amino-acid polypeptide reads, in one-letter code: Dihydroxy-acid dehydratase (563 aa).

Cys51 is a binding site for [2Fe-2S] cluster. Asp83 contributes to the Mg(2+) binding site. Cys124 is a [2Fe-2S] cluster binding site. Residues Asp125 and Lys126 each coordinate Mg(2+). N6-carboxylysine is present on Lys126. Cys196 is a binding site for [2Fe-2S] cluster. Residue Glu448 coordinates Mg(2+). The active-site Proton acceptor is Ser474.

The protein belongs to the IlvD/Edd family. In terms of assembly, homodimer. It depends on [2Fe-2S] cluster as a cofactor. Mg(2+) is required as a cofactor.

The catalysed reaction is (2R)-2,3-dihydroxy-3-methylbutanoate = 3-methyl-2-oxobutanoate + H2O. The enzyme catalyses (2R,3R)-2,3-dihydroxy-3-methylpentanoate = (S)-3-methyl-2-oxopentanoate + H2O. Its pathway is amino-acid biosynthesis; L-isoleucine biosynthesis; L-isoleucine from 2-oxobutanoate: step 3/4. The protein operates within amino-acid biosynthesis; L-valine biosynthesis; L-valine from pyruvate: step 3/4. Functions in the biosynthesis of branched-chain amino acids. Catalyzes the dehydration of (2R,3R)-2,3-dihydroxy-3-methylpentanoate (2,3-dihydroxy-3-methylvalerate) into 2-oxo-3-methylpentanoate (2-oxo-3-methylvalerate) and of (2R)-2,3-dihydroxy-3-methylbutanoate (2,3-dihydroxyisovalerate) into 2-oxo-3-methylbutanoate (2-oxoisovalerate), the penultimate precursor to L-isoleucine and L-valine, respectively. The sequence is that of Dihydroxy-acid dehydratase from Polynucleobacter necessarius subsp. necessarius (strain STIR1).